The following is a 167-amino-acid chain: Crossover junction endodeoxyribonuclease RuvC (167 aa).

Catalysis depends on residues D7, E67, and D140. Residues D7, E67, and D140 each coordinate Mg(2+).

The protein belongs to the RuvC family. As to quaternary structure, homodimer which binds Holliday junction (HJ) DNA. The HJ becomes 2-fold symmetrical on binding to RuvC with unstacked arms; it has a different conformation from HJ DNA in complex with RuvA. In the full resolvosome a probable DNA-RuvA(4)-RuvB(12)-RuvC(2) complex forms which resolves the HJ. Mg(2+) is required as a cofactor.

Its subcellular location is the cytoplasm. It catalyses the reaction Endonucleolytic cleavage at a junction such as a reciprocal single-stranded crossover between two homologous DNA duplexes (Holliday junction).. Its function is as follows. The RuvA-RuvB-RuvC complex processes Holliday junction (HJ) DNA during genetic recombination and DNA repair. Endonuclease that resolves HJ intermediates. Cleaves cruciform DNA by making single-stranded nicks across the HJ at symmetrical positions within the homologous arms, yielding a 5'-phosphate and a 3'-hydroxyl group; requires a central core of homology in the junction. The consensus cleavage sequence is 5'-(A/T)TT(C/G)-3'. Cleavage occurs on the 3'-side of the TT dinucleotide at the point of strand exchange. HJ branch migration catalyzed by RuvA-RuvB allows RuvC to scan DNA until it finds its consensus sequence, where it cleaves and resolves the cruciform DNA. In Moorella thermoacetica (strain ATCC 39073 / JCM 9320), this protein is Crossover junction endodeoxyribonuclease RuvC.